The following is a 660-amino-acid chain: MFQQLTYRLRLFRRRHKYIFINSIFLSVIIIFLIYSYWSNLPAEDNSAIINEKGTYHRSLWESITMALFPPKTKPFEEKKPQVNPNNNQEVGVESGASEISQHKQQQQQQQHAKEPTTKTSSKSLVSDEAYQLNLKLINEQQEKYNRLHPFEQKRLQQGYEFFDNIFKIFYQAKPSVSQLNTYPSKKRIYHARFDSLADDDTIFSEKYLSQFLQLSNEELAAMKKSHKYVVENLPEDAPDGLYKKNGIVYVAGGSFNWLTLLSIKSLRAVGCHLPIEVFIPKIEEYESDLCNRILPELDARCIYMKNQLMNPNKDNSDSFANKFEFKGYQYKALAILLSSFENVLLLDSDNIPAHSPEELFENDPFKSYGLVVWPDYWKRATSPYYYNIADIDVSEKYLGSKYNEVEGQYTDLSVEKGSVELDKIPLHQRLGSIPDPTSESGQLLISKKTHLKPLLLALYYNLYGPSHYYPLFSQGSDGEGDKETFLAATVTLGKRYYQVAKFLVSLGHFKVPGGDFEGCGMGQFDPQQDLEYIKLREQYAKIPEKDKEKQHKFKLQHQVLEKGPEILFVHANFPKLNPWKLKQEKKIFDAKGNRVRLYGPGMIKRIGYDFEWFQWEGMKYLLCIYDVNLQIFQDVKKSDLCDEILEHLRFLESTQNITD.

The Cytoplasmic segment spans residues 1-17; the sequence is MFQQLTYRLRLFRRRHK. A helical membrane pass occupies residues 18–38; it reads YIFINSIFLSVIIIFLIYSYW. At 39–660 the chain is on the extracellular side; it reads SNLPAEDNSA…FLESTQNITD (622 aa). The interval 75–125 is disordered; the sequence is PFEEKKPQVNPNNNQEVGVESGASEISQHKQQQQQQQHAKEPTTKTSSKSL. Asparagine 657 is a glycosylation site (N-linked (GlcNAc...) asparagine).

The protein belongs to the MNN1/MNT family.

The protein resides in the golgi apparatus membrane. It functions in the pathway protein modification; protein glycosylation. Its function is as follows. Alpha-1,2-mannosyltransferase required for cell wall integrity. Responsible for addition of the first alpha-1,2-linked mannose to form the branches on the mannan backbone of oligosaccharides. Addition of alpha-1,2-mannose is required for stabilization of the alpha-1,6-mannose backbone and hence regulates mannan fibril length; and is important for both immune recognition and virulence. The sequence is that of Alpha-1,2-mannosyltransferase MNN21 (MNN21) from Candida albicans (strain SC5314 / ATCC MYA-2876) (Yeast).